The chain runs to 277 residues: Large ribosomal subunit protein uL2cz/uL2cy (277 aa).

2 disordered regions span residues 1 to 31 (MAIHLYKTSTPSTRNGAVDSQAKSNTRNTRK) and 227 to 277 (NPVD…RRSK).

It belongs to the universal ribosomal protein uL2 family. Part of the 50S ribosomal subunit.

Its subcellular location is the plastid. It is found in the chloroplast. The protein is Large ribosomal subunit protein uL2cz/uL2cy (rpl2-A) of Manihot esculenta (Cassava).